We begin with the raw amino-acid sequence, 250 residues long: AA9 family lytic polysaccharide monooxygenase AA17 (250 aa).

An N-terminal signal peptide occupies residues 1–21; it reads MAMSKIVSLTGLLASASLVAG. 2 residues coordinate Cu(2+): histidine 22 and histidine 107. Disulfide bonds link cysteine 77–cysteine 199 and cysteine 118–cysteine 122. Residue asparagine 159 is glycosylated (N-linked (GlcNAc...) asparagine). O2-binding residues include histidine 185 and glutamine 194. Tyrosine 196 contributes to the Cu(2+) binding site.

Belongs to the polysaccharide monooxygenase AA9 family. The cofactor is Cu(2+).

The protein resides in the secreted. Functionally, lytic polysaccharide monooxygenase (LPMO) that exhibits oxidative cleavage beta-O-4 linkage of lignin resulting in the formation of aromatic compound guaiacol. Catalysis by LPMOs requires the reduction of the active-site copper from Cu(II) to Cu(I) by a reducing agent and H(2)O(2) or O(2) as a cosubstrate. Does not use cellulose, cello-oligosaccharides, xyloglucan, xylan, chitin nor starch as substrates. Able to depolymerize the lignin dimer guaicyl glycerol beta-guaicyl ether (GGE). The sequence is that of AA9 family lytic polysaccharide monooxygenase AA17 from Aspergillus oryzae (strain ATCC 42149 / RIB 40) (Yellow koji mold).